The chain runs to 380 residues: L-lactate dehydrogenase (380 aa).

The region spanning 1–380 (MIISSPNDYR…TRDSLVGLPR (380 aa)) is the FMN hydroxy acid dehydrogenase domain. A substrate-binding site is contributed by Tyr24. Ser106 and Gln127 together coordinate FMN. Residue Tyr129 coordinates substrate. Position 155 (Thr155) interacts with FMN. Arg164 lines the substrate pocket. Lys251 lines the FMN pocket. Residue His275 is the Proton acceptor of the active site. Substrate is bound at residue Arg278. 306-330 (DSGIRTGLDVVRMLALGAKGVLLGR) lines the FMN pocket.

The protein belongs to the FMN-dependent alpha-hydroxy acid dehydrogenase family. FMN is required as a cofactor.

The protein resides in the cell inner membrane. The catalysed reaction is (S)-lactate + A = pyruvate + AH2. Its function is as follows. Catalyzes the conversion of L-lactate to pyruvate. Is coupled to the respiratory chain. In Azorhizobium caulinodans (strain ATCC 43989 / DSM 5975 / JCM 20966 / LMG 6465 / NBRC 14845 / NCIMB 13405 / ORS 571), this protein is L-lactate dehydrogenase.